The chain runs to 422 residues: uncharacterized protein (422 aa).

It belongs to the asfivirus K421R family.

It localises to the virion. This is an uncharacterized protein from Ornithodoros (relapsing fever ticks).